A 642-amino-acid chain; its full sequence is Nucleolar GTP-binding protein 1 (642 aa).

The OBG-type G domain occupies 168–340; the sequence is RTLLICGYPN…VRNKACEKLL (173 aa). GTP contacts are provided by residues 174–181, 220–224, and 288–291; these read GYPNVGKS, DTPGI, and NKTD. The interval 585 to 642 is disordered; it reads MDGVADASMRSKADRMAKLHRRERNRQARQGEADRHATASLPKHLFSGKRGIGSNDRR. A compositionally biased stretch (basic and acidic residues) spans 609 to 621; sequence NRQARQGEADRHA.

Belongs to the TRAFAC class OBG-HflX-like GTPase superfamily. OBG GTPase family. NOG subfamily.

Its subcellular location is the nucleus. It localises to the nucleolus. Its function is as follows. Involved in the biogenesis of the 60S ribosomal subunit. This chain is Nucleolar GTP-binding protein 1 (NOG1), found in Eremothecium gossypii (strain ATCC 10895 / CBS 109.51 / FGSC 9923 / NRRL Y-1056) (Yeast).